Reading from the N-terminus, the 410-residue chain is Regulator of microtubule dynamics protein 2 (410 aa).

Residues 9–28 (LILGIMVGTAGISLLLLWYH) traverse the membrane as a helical segment. Ser-51 bears the Phosphoserine mark. The stretch at 68-110 (FQERQLQILEKLNELLTNMEELKEEIRFLKEAIPKLEEYIQDE) forms a coiled coil. Ser-121 bears the Phosphoserine mark. The segment covering 122 to 131 (PQHRARKRRL) has biased composition (basic residues). The segment at 122 to 164 (PQHRARKRRLPTIQSSATSNSSEEAESEGGYITANTDTEEQSF) is disordered. Thr-139 carries the phosphothreonine modification. Tyr-152 is subject to Phosphotyrosine. 2 positions are modified to phosphothreonine: Thr-154 and Thr-157.

It belongs to the RMDN family. Interacts with microtubules.

The protein resides in the membrane. Its subcellular location is the cytoplasm. It is found in the cytoskeleton. The protein localises to the spindle. It localises to the spindle pole. The polypeptide is Regulator of microtubule dynamics protein 2 (RMDN2) (Homo sapiens (Human)).